The following is a 65-amino-acid chain: Large ribosomal subunit protein bL32 (65 aa).

The segment covering 1-18 (MAVPKRRHSKSRTRKRRS) has biased composition (basic residues). The segment at 1-20 (MAVPKRRHSKSRTRKRRSTY) is disordered.

This sequence belongs to the bacterial ribosomal protein bL32 family.

The chain is Large ribosomal subunit protein bL32 from Salinibacter ruber (strain DSM 13855 / M31).